Here is a 266-residue protein sequence, read N- to C-terminus: Apolipoprotein A-I (266 aa).

A signal peptide spans 1–18; it reads MKAVVLTLAVLFLTGSQA. 2 consecutive repeat copies span residues 67-88 and 89-110. The interval 67-266 is 10 X approximate tandem repeats; the sequence is LKLLDNWDSL…DEATKKLNSQ (200 aa). Met109 is modified (methionine sulfoxide). Residues 111–121 form a 3; half-length repeat; that stretch reads KDLEEVKKKVQ. Tandem repeats lie at residues 122–143, 144–165, 166–187, 188–209, and 210–231. The stretch at 232-242 is one 9; half-length repeat; the sequence is PALEDLRQGLL. Copy 10 of the repeat occupies 243-266; the sequence is PVLENFRDSLLAAVDEATKKLNSQ.

This sequence belongs to the apolipoprotein A1/A4/E family. In terms of assembly, homodimer. Interacts with APOA1BP and CLU. Component of a sperm activating protein complex (SPAP), consisting of APOA1, an immunoglobulin heavy chain, an immunoglobulin light chain and albumin. Interacts with NDRG1. Interacts with SCGB3A2. Interacts with NAXE and YJEFN3. Post-translationally, glycosylated. Palmitoylated. In terms of processing, phosphorylation sites are present in the extracellular medium.

The protein resides in the secreted. Functionally, participates in the reverse transport of cholesterol from tissues to the liver for excretion by promoting cholesterol efflux from tissues and by acting as a cofactor for the lecithin cholesterol acyltransferase (LCAT). As part of the SPAP complex, activates spermatozoa motility. The protein is Apolipoprotein A-I (APOA1) of Neomonachus schauinslandi (Hawaiian monk seal).